A 404-amino-acid chain; its full sequence is MKLPIYLDYSATCPVDPRVAEKMVQYMTMDGTFGNPASRSHRYGWQAEEAVDTAREQIAALLNADPREIVFTSGATESDNLAIKGVAHFYNKQGKHIITSKTEHKAVLDTMRQLEREGFEVTYLDPESNGLVDLAKLEAAMRDDTILVSIMHVNNEIGVVQDIAAIGELCRSRKVVFHVDAAQSAGKVAIDVQEMKVDLISLSAHKAYGPKGIGALYVRRKPRIRLEAQMHGGGHERGFRSGTLPTHQIVGMGEAFRIAKEELQQDYDHALKLRNRLLDGIKDMEAVTINGDLDQRVPHNLNVSFAFVEGESLLMALKDLAVSSGSACTSASLEPSYVLRALGLNDELAHSSIRFSFGRFTTEAEIDYAIELIRVAVDKLRAMSPLWDMYKDGVDLNTVEWAHH.

Pyridoxal 5'-phosphate contacts are provided by residues 75 to 76 (AT), N155, Q183, and 203 to 205 (SAH). Residue K206 is modified to N6-(pyridoxal phosphate)lysine. T243 is a binding site for pyridoxal 5'-phosphate. The active-site Cysteine persulfide intermediate is C328. Residue C328 coordinates [2Fe-2S] cluster.

It belongs to the class-V pyridoxal-phosphate-dependent aminotransferase family. NifS/IscS subfamily. In terms of assembly, homodimer. Forms a heterotetramer with IscU, interacts with other sulfur acceptors. Pyridoxal 5'-phosphate is required as a cofactor.

The protein resides in the cytoplasm. It carries out the reaction (sulfur carrier)-H + L-cysteine = (sulfur carrier)-SH + L-alanine. The protein operates within cofactor biosynthesis; iron-sulfur cluster biosynthesis. Functionally, master enzyme that delivers sulfur to a number of partners involved in Fe-S cluster assembly, tRNA modification or cofactor biosynthesis. Catalyzes the removal of elemental sulfur atoms from cysteine to produce alanine. Functions as a sulfur delivery protein for Fe-S cluster synthesis onto IscU, an Fe-S scaffold assembly protein, as well as other S acceptor proteins. The chain is Cysteine desulfurase IscS from Vibrio cholerae serotype O1 (strain ATCC 39541 / Classical Ogawa 395 / O395).